Consider the following 94-residue polypeptide: Putative RNA-binding protein RbpD (94 aa).

One can recognise an RRM domain in the interval 2 to 79 (TIYVGNLSYR…RQLRVNKAKP (78 aa)). A disordered region spans residues 73–94 (RVNKAKPREDDRRGSWGKKQDY). The span at 78-94 (KPREDDRRGSWGKKQDY) shows a compositional bias: basic and acidic residues.

This Nostoc sp. (strain PCC 7120 / SAG 25.82 / UTEX 2576) protein is Putative RNA-binding protein RbpD (rbpD).